We begin with the raw amino-acid sequence, 1571 residues long: Phospholipid-transporting ATPase DNF1 (1571 aa).

The interval 1–94 (MSGTFHGDGH…TPKLNNGSGT (94 aa)) is disordered. Topologically, residues 1–214 (MSGTFHGDGH…TFLPKNILFQ (214 aa)) are cytoplasmic. Positions 29 to 40 (EDTHIAPTHFDD) are enriched in basic and acidic residues. The segment covering 42–56 (ATSNKYSRPQVSFND) has biased composition (polar residues). A Phosphoserine modification is found at serine 53. Acidic residues predominate over residues 66–76 (AEEFTFNDDTE). Threonine 70 bears the Phosphothreonine mark. Residues 80–93 (HSFQPTPKLNNGSG) show a composition bias toward polar residues. Serine 81 is modified (phosphoserine). Threonine 85 bears the Phosphothreonine mark. Serine 92 is subject to Phosphoserine. Threonine 94 is subject to Phosphothreonine. Serine 104 is subject to Phosphoserine. Residue threonine 109 is modified to Phosphothreonine. Residues 215 to 235 (FHNFANVYFLVLIILGAFQIF) form a helical membrane-spanning segment. Residues 234-241 (IFGVTNPG) form an involved in phosphatidylcholine substrate selection region. Topologically, residues 236 to 239 (GVTN) are extracellular. The helical transmembrane segment at 240 to 260 (PGLSAVPLVVIVIITAIKDAI) threads the bilayer. The Cytoplasmic segment spans residues 261 to 553 (EDSRRTVLDL…RISRELNFSV (293 aa)). Phosphoserine is present on residues serine 351, serine 354, serine 358, and serine 365. Residue tyrosine 368 is modified to Phosphotyrosine. A helical membrane pass occupies residues 554-574 (VINFVLLFILCFVSGIANGVY). Over 575 to 594 (YDKKGRSRFSYEFGTIAGSA) the chain is Extracellular. The interval 586-590 (EFGTI) is involved in phosphatidylcholine substrate selection. Residues 595-615 (ATNGFVSFWVAVILYQSLVPI) traverse the membrane as a helical segment. Residues 616–1188 (SLYISVEIIK…WSYKRLAEMI (573 aa)) are Cytoplasmic-facing. Residue aspartate 667 is the 4-aspartylphosphate intermediate of the active site. ATP-binding residues include aspartate 667, lysine 668, threonine 669, glutamate 801, phenylalanine 842, serine 844, lysine 847, and lysine 871. Position 667 (aspartate 667) interacts with Mg(2+). Mg(2+) is bound at residue threonine 669. Lysine 895 is covalently cross-linked (Glycyl lysine isopeptide (Lys-Gly) (interchain with G-Cter in ubiquitin)). Positions 909, 910, 989, 990, 991, 1104, and 1110 each coordinate ATP. Residue aspartate 1130 participates in Mg(2+) binding. Residues asparagine 1133 and aspartate 1134 each coordinate ATP. A Mg(2+)-binding site is contributed by aspartate 1134. The chain crosses the membrane as a helical span at residues 1189-1209 (PEFFYKNMIFALALFWYGIYN). Residues 1210-1219 (DFDGSYLYEY) are Extracellular-facing. A helical membrane pass occupies residues 1220 to 1240 (TYMMFYNLAFTSLPVIFLGIL). Topologically, residues 1241–1270 (DQDVNDTISLVVPQLYRVGILRKEWNQRKF) are cytoplasmic. The helical transmembrane segment at 1271-1291 (LWYMLDGLYQSIICFFFPYLV) threads the bilayer. Topologically, residues 1292–1307 (YHKNMIVTSNGLGLDH) are extracellular. Residues 1308–1328 (RYFVGVYVTTIAVISCNTYVL) traverse the membrane as a helical segment. The Cytoplasmic segment spans residues 1329-1334 (LHQYRW). The chain crosses the membrane as a helical span at residues 1335–1355 (DWFSGLFIALSCLVVFAWTGI). Residues 1356-1375 (WSSAIASREFFKAAARIYGA) are Extracellular-facing. The chain crosses the membrane as a helical span at residues 1376-1396 (PSFWAVFFVAVLFCLLPRFTY). Arginine 1393 serves as a coordination point for a 1,2-diacyl-sn-glycero-3-phospho-L-serine. At 1397–1571 (DSFQKFFYPT…ASLIGTQQNN (175 aa)) the chain is on the cytoplasmic side. The residue at position 1506 (serine 1506) is a Phosphoserine. Threonine 1551 carries the phosphothreonine modification. 2 positions are modified to phosphoserine: serine 1552 and serine 1563.

It belongs to the cation transport ATPase (P-type) (TC 3.A.3) family. Type IV subfamily. Component of a flippase complex consisting of DNF1 and LEM3. Interacts with LEM3; the interaction is direct and required for their mutual export from the endoplasmic reticulum. It depends on Mg(2+) as a cofactor. Phosphorylated by FPK1 and KIN82.

The protein resides in the cell membrane. It is found in the endosome membrane. It localises to the golgi apparatus. Its subcellular location is the trans-Golgi network membrane. The protein localises to the cell septum. The protein resides in the bud. The catalysed reaction is ATP + H2O + phospholipidSide 1 = ADP + phosphate + phospholipidSide 2.. It carries out the reaction a 1,2-diacyl-sn-glycero-3-phosphoethanolamine(out) + ATP + H2O = a 1,2-diacyl-sn-glycero-3-phosphoethanolamine(in) + ADP + phosphate + H(+). It catalyses the reaction a 1,2-diacyl-sn-glycero-3-phosphocholine(out) + ATP + H2O = a 1,2-diacyl-sn-glycero-3-phosphocholine(in) + ADP + phosphate + H(+). The enzyme catalyses a beta-D-glucosyl-(1&lt;-&gt;1')-N-acylsphing-4-enine(out) + ATP + H2O = a beta-D-glucosyl-(1&lt;-&gt;1')-N-acylsphing-4-enine(in) + ADP + phosphate + H(+). The catalysed reaction is a 1,2-diacyl-sn-glycero-3-phospho-L-serine(out) + ATP + H2O = a 1,2-diacyl-sn-glycero-3-phospho-L-serine(in) + ADP + phosphate + H(+). Its function is as follows. Catalytic component of a P4-ATPase flippase complex which catalyzes the hydrolysis of ATP coupled to the transport of glucosylceramide, phosphatidylcholine, phosphatidylethanolamine, and small amounts of phosphatidylserine from the lumenal to the cytosolic leaflet of the cell membrane and ensures the maintenance of asymmetric distribution of phospholipids. Does not appear to transport sphingomyelin, inositol phosphoceramide, or phosphatidic acid. Required for efficient endocytosis. This chain is Phospholipid-transporting ATPase DNF1, found in Saccharomyces cerevisiae (strain ATCC 204508 / S288c) (Baker's yeast).